Here is a 212-residue protein sequence, read N- to C-terminus: Glycerol-3-phosphate acyltransferase (212 aa).

A run of 5 helical transmembrane segments spans residues 3–23 (ILLA…VVVS), 51–71 (KAAI…VWLA), 78–98 (DVAV…PVFF), 115–135 (AVHP…AFFF), and 139–159 (SLAA…LFGT).

Belongs to the PlsY family. In terms of assembly, probably interacts with PlsX.

It localises to the cell inner membrane. The enzyme catalyses an acyl phosphate + sn-glycerol 3-phosphate = a 1-acyl-sn-glycero-3-phosphate + phosphate. It functions in the pathway lipid metabolism; phospholipid metabolism. In terms of biological role, catalyzes the transfer of an acyl group from acyl-phosphate (acyl-PO(4)) to glycerol-3-phosphate (G3P) to form lysophosphatidic acid (LPA). This enzyme utilizes acyl-phosphate as fatty acyl donor, but not acyl-CoA or acyl-ACP. The sequence is that of Glycerol-3-phosphate acyltransferase from Burkholderia ambifaria (strain MC40-6).